Reading from the N-terminus, the 256-residue chain is 5'-nucleotidase SurE (256 aa).

4 residues coordinate a divalent metal cation: D9, D10, S42, and N95.

It belongs to the SurE nucleotidase family. A divalent metal cation is required as a cofactor.

It localises to the cytoplasm. The enzyme catalyses a ribonucleoside 5'-phosphate + H2O = a ribonucleoside + phosphate. Nucleotidase that shows phosphatase activity on nucleoside 5'-monophosphates. This chain is 5'-nucleotidase SurE, found in Campylobacter curvus (strain 525.92).